A 296-amino-acid polypeptide reads, in one-letter code: Light-independent protochlorophyllide reductase iron-sulfur ATP-binding protein (296 aa).

Positions 1-11 (MTSTITRKEDG) are enriched in basic and acidic residues. A disordered region spans residues 1-20 (MTSTITRKEDGEGSVQVKQD). ATP is bound by residues 39–44 (GIGKST) and lysine 68. A Mg(2+)-binding site is contributed by serine 43. [4Fe-4S] cluster contacts are provided by cysteine 124 and cysteine 158. 209–210 (NR) lines the ATP pocket.

This sequence belongs to the NifH/BchL/ChlL family. As to quaternary structure, homodimer. Protochlorophyllide reductase is composed of three subunits; ChlL, ChlN and ChlB. The cofactor is [4Fe-4S] cluster.

It catalyses the reaction chlorophyllide a + oxidized 2[4Fe-4S]-[ferredoxin] + 2 ADP + 2 phosphate = protochlorophyllide a + reduced 2[4Fe-4S]-[ferredoxin] + 2 ATP + 2 H2O. It participates in porphyrin-containing compound metabolism; chlorophyll biosynthesis (light-independent). Component of the dark-operative protochlorophyllide reductase (DPOR) that uses Mg-ATP and reduced ferredoxin to reduce ring D of protochlorophyllide (Pchlide) to form chlorophyllide a (Chlide). This reaction is light-independent. The L component serves as a unique electron donor to the NB-component of the complex, and binds Mg-ATP. This Prochlorococcus marinus (strain NATL1A) protein is Light-independent protochlorophyllide reductase iron-sulfur ATP-binding protein.